Consider the following 315-residue polypeptide: Aspartate carbamoyltransferase catalytic subunit (315 aa).

Carbamoyl phosphate-binding residues include Arg55 and Thr56. Lys83 serves as a coordination point for L-aspartate. Arg105, His138, and Gln141 together coordinate carbamoyl phosphate. Arg171 and Arg225 together coordinate L-aspartate. Carbamoyl phosphate contacts are provided by Gly266 and Pro267.

This sequence belongs to the aspartate/ornithine carbamoyltransferase superfamily. ATCase family. In terms of assembly, heterododecamer (2C3:3R2) of six catalytic PyrB chains organized as two trimers (C3), and six regulatory PyrI chains organized as three dimers (R2).

The catalysed reaction is carbamoyl phosphate + L-aspartate = N-carbamoyl-L-aspartate + phosphate + H(+). Its pathway is pyrimidine metabolism; UMP biosynthesis via de novo pathway; (S)-dihydroorotate from bicarbonate: step 2/3. Its function is as follows. Catalyzes the condensation of carbamoyl phosphate and aspartate to form carbamoyl aspartate and inorganic phosphate, the committed step in the de novo pyrimidine nucleotide biosynthesis pathway. In Mycolicibacterium vanbaalenii (strain DSM 7251 / JCM 13017 / BCRC 16820 / KCTC 9966 / NRRL B-24157 / PYR-1) (Mycobacterium vanbaalenii), this protein is Aspartate carbamoyltransferase catalytic subunit.